The sequence spans 67 residues: Large ribosomal subunit protein uL29 (67 aa).

This sequence belongs to the universal ribosomal protein uL29 family.

The polypeptide is Large ribosomal subunit protein uL29 (Moorella thermoacetica (strain ATCC 39073 / JCM 9320)).